Consider the following 471-residue polypeptide: 3-isopropylmalate dehydratase large subunit (471 aa).

[4Fe-4S] cluster contacts are provided by C349, C409, and C412.

The protein belongs to the aconitase/IPM isomerase family. LeuC type 1 subfamily. As to quaternary structure, heterodimer of LeuC and LeuD. It depends on [4Fe-4S] cluster as a cofactor.

The catalysed reaction is (2R,3S)-3-isopropylmalate = (2S)-2-isopropylmalate. It functions in the pathway amino-acid biosynthesis; L-leucine biosynthesis; L-leucine from 3-methyl-2-oxobutanoate: step 2/4. In terms of biological role, catalyzes the isomerization between 2-isopropylmalate and 3-isopropylmalate, via the formation of 2-isopropylmaleate. In Aliivibrio fischeri (strain MJ11) (Vibrio fischeri), this protein is 3-isopropylmalate dehydratase large subunit.